The chain runs to 180 residues: Nucleoplasmin-3 (180 aa).

A2 carries the post-translational modification N-acetylalanine. Phosphoserine occurs at positions 13 and 16. At R27 the chain carries Omega-N-methylarginine. The segment at 141–180 (TMSNDVSEEESEEEEEEEDSDEEEAELCPILPAKKQGGRP) is disordered. A compositionally biased stretch (acidic residues) spans 146–166 (VSEEESEEEEEEEDSDEEEAE). Phosphoserine occurs at positions 147, 151, and 160.

The protein belongs to the nucleoplasmin family. In terms of assembly, interacts with NPM (via N-terminus). Forms a pentamer with NPM at a ratio 4:1 (NPM3/NPM). Two pentamers form a decamer. In terms of processing, phosphorylated.

The protein resides in the nucleus. It is found in the nucleolus. Functionally, plays a role in the regulation of diverse cellular processes such as ribosome biogenesis, chromatin remodeling or protein chaperoning. Modulates the histone chaperone function and the RNA-binding activity of nucleolar phosphoprotein B23/NPM. Efficiently mediates chromatin remodeling when included in a pentamer containing NPM3 and NPM. This Pongo abelii (Sumatran orangutan) protein is Nucleoplasmin-3 (NPM3).